Consider the following 102-residue polypeptide: Putative sortase YwpE (102 aa).

Catalysis depends on H17, which acts as the Proton donor/acceptor. C78 acts as the Acyl-thioester intermediate in catalysis.

This sequence belongs to the bacterial sortase family.

In terms of biological role, seems not to play a major role if any as a sortase. The chain is Putative sortase YwpE (ywpE) from Bacillus subtilis (strain 168).